Reading from the N-terminus, the 352-residue chain is Endophilin-A1 (352 aa).

Residues 1–21 form a membrane-binding amphipathic helix region; sequence MSVAGLKKQFHKATQKVSEKV. Positions 1–27 are disordered; that stretch reads MSVAGLKKQFHKATQKVSEKVGGAEGT. Residues 1 to 125 form a binds and tubulates liposomes region; that stretch reads MSVAGLKKQF…EVGEAMRELS (125 aa). Positions 18 to 249 constitute a BAR domain; sequence SEKVGGAEGT…LEERIRQASS (232 aa). The tract at residues 60–87 is required for dimerization upon membrane association; sequence PNPASRAKLSMINTMSKIRGQEKGPGYP. Residues 181–248 are a coiled coil; that stretch reads EELRQALEKF…RLEERIRQAS (68 aa). Ser262 is subject to Phosphoserine. A disordered region spans residues 264-289; it reads EFATGDSTQPNGGLSHTGTPKPPGVQ. Residues 268 to 281 are compositionally biased toward polar residues; the sequence is GDSTQPNGGLSHTG. The SH3 domain occupies 290–349; it reads MDQPCCRALYDFEPENEGELGFKEGDIITLTNQIDENWYEGMLHGQSGFFPINYVEILVA. Phosphotyrosine is present on Tyr299.

This sequence belongs to the endophilin family. In terms of assembly, monomer; in cytoplasm. Homodimer; when associated with membranes. Interacts with SYNJ1. Interacts with DNM1. Interacts with MAP4K3; the interaction appears to regulate MAP4K3-mediated JNK activation. Interacts with OPHN1. Interacts with PDCD6IP. Interacts with BIN2. Interacts with ATXN2. Interacts with ADAM9 and ADAM15 cytoplasmic tails. Interacts with TMEM108. Interacts with ADGRB2.

The protein localises to the cytoplasm. It localises to the membrane. The protein resides in the early endosome. Its subcellular location is the presynapse. In terms of biological role, implicated in synaptic vesicle endocytosis. May recruit other proteins to membranes with high curvature. Required for BDNF-dependent dendrite outgrowth. Cooperates with SH3GL2 to mediate BDNF-NTRK2 early endocytic trafficking and signaling from early endosomes. This is Endophilin-A1 (Sh3gl2) from Mus musculus (Mouse).